Here is a 438-residue protein sequence, read N- to C-terminus: L-cysteine:1D-myo-inositol 2-amino-2-deoxy-alpha-D-glucopyranoside ligase (438 aa).

The segment at 1–27 (MDSWTSPDVPALPFTAEGPRVHDTARG) is disordered. Cys-45 lines the Zn(2+) pocket. L-cysteinyl-5'-AMP-binding positions include 45 to 48 (CGIT), Thr-60, and 83 to 85 (NVT). The 'HIGH' region motif lies at 47-57 (ITPYDATHLGH). Positions 197 to 202 (DRGGDP) match the 'ERGGDP' region motif. Position 238 (Trp-238) interacts with L-cysteinyl-5'-AMP. Cys-242 serves as a coordination point for Zn(2+). 260–262 (GDD) contacts L-cysteinyl-5'-AMP. His-267 provides a ligand contact to Zn(2+). Position 293 (Val-293) interacts with L-cysteinyl-5'-AMP. A 'KMSKS' region motif is present at residues 299-303 (KMSKS).

It belongs to the class-I aminoacyl-tRNA synthetase family. MshC subfamily. As to quaternary structure, monomer. Zn(2+) is required as a cofactor.

It catalyses the reaction 1D-myo-inositol 2-amino-2-deoxy-alpha-D-glucopyranoside + L-cysteine + ATP = 1D-myo-inositol 2-(L-cysteinylamino)-2-deoxy-alpha-D-glucopyranoside + AMP + diphosphate + H(+). Functionally, catalyzes the ATP-dependent condensation of GlcN-Ins and L-cysteine to form L-Cys-GlcN-Ins. The polypeptide is L-cysteine:1D-myo-inositol 2-amino-2-deoxy-alpha-D-glucopyranoside ligase (Kytococcus sedentarius (strain ATCC 14392 / DSM 20547 / JCM 11482 / CCUG 33030 / NBRC 15357 / NCTC 11040 / CCM 314 / 541) (Micrococcus sedentarius)).